A 179-amino-acid chain; its full sequence is UPF0227 protein PM0825 (179 aa).

This sequence belongs to the UPF0227 family.

In Pasteurella multocida (strain Pm70), this protein is UPF0227 protein PM0825.